The following is a 130-amino-acid chain: Glycine cleavage system H protein (130 aa).

The 83-residue stretch at 24 to 106 (TVTIGITDHA…YDDGWFFKVK (83 aa)) folds into the Lipoyl-binding domain. At K65 the chain carries N6-lipoyllysine.

Belongs to the GcvH family. As to quaternary structure, the glycine cleavage system is composed of four proteins: P, T, L and H. (R)-lipoate serves as cofactor.

In terms of biological role, the glycine cleavage system catalyzes the degradation of glycine. The H protein shuttles the methylamine group of glycine from the P protein to the T protein. This Saccharophagus degradans (strain 2-40 / ATCC 43961 / DSM 17024) protein is Glycine cleavage system H protein.